The sequence spans 153 residues: Pheromone-binding protein Gp-9 (153 aa).

An N-terminal signal peptide occupies residues 1–19; that stretch reads MKTFVLHIFIFAFVAFASA. 3 cysteine pairs are disulfide-bonded: cysteine 37–cysteine 77, cysteine 73–cysteine 129, and cysteine 118–cysteine 138.

Belongs to the PBP/GOBP family. As to quaternary structure, homodimer.

It is found in the secreted. Functionally, colony queen number, a major feature of social organization, is associated with worker genotype for Gp-9. Colonies are headed by either a single reproductive queen (monogyne form) or multiple queens (polygyne form). Differences in worker Gp-9 genotypes between social forms may cause differences in workers' abilities to recognize queens and regulate their numbers. The sequence is that of Pheromone-binding protein Gp-9 from Solenopsis amblychila (Desert fire ant).